A 918-amino-acid polypeptide reads, in one-letter code: Serine/threonine-protein kinase D1 (918 aa).

At Tyr93 the chain carries Phosphotyrosine. Residues 144–194 (PHALFVHSYRAPAFCDHCGEMLWGLVRQGLKCEGCGLNYHKRCAFKIPNNC) form a Phorbol-ester/DAG-type 1 zinc finger. Phosphoserine is present on residues Ser203, Ser206, Ser217, and Ser221. The Phorbol-ester/DAG-type 2 zinc-finger motif lies at 276–326 (PHTFVIHSYTRPTVCQFCKKLLKGLFRQGLQCKDCRFNCHKRCAPKVPNNC). 2 disordered regions span residues 338 to 362 (SPGA…NSGL) and 380 to 408 (EGQS…STSN). Composition is skewed to acidic residues over residues 345-355 (VVMEEGSDDND) and 387-396 (EMQDPDADQE). Ser351 carries the post-translational modification Phosphoserine. Residues Ser403 and Ser407 each carry the phosphoserine; by MAPK13 modification. The 120-residue stretch at 428 to 547 (TVMKEGWMVH…WEVAIQHALM (120 aa)) folds into the PH domain. Residue Tyr438 is modified to Phosphotyrosine. At Ser454 the chain carries Phosphoserine. Phosphotyrosine; by ABL is present on Tyr469. Tyr508 carries the phosphotyrosine modification. At Ser554 the chain carries Phosphoserine. A Protein kinase domain is found at 589–845 (IFPDEVLGSG…VDKTLSHPWL (257 aa)). ATP contacts are provided by residues 595-603 (LGSGQFGIV) and Lys618. Residue Asp712 is the Proton acceptor of the active site. Ser744 carries the phosphoserine; by PKC/PRKCD modification. The residue at position 748 (Ser748) is a Phosphoserine; by autocatalysis and PKC/PRKCD. Tyr755 carries the phosphotyrosine modification. Ser916 is subject to Phosphoserine; by autocatalysis.

The protein belongs to the protein kinase superfamily. CAMK Ser/Thr protein kinase family. PKD subfamily. In terms of assembly, interacts (via N-terminus) with ADAP1/CENTA1. Interacts with MAPK13. Interacts with DAPK1 in an oxidative stress-regulated manner. Interacts with USP28; the interaction induces phosphorylation of USP28 and activated KRAS-mediated stabilization of ZNF304. Interacts with AKAP13 (via C-terminal domain). The cofactor is Mg(2+). Phosphorylated at Ser-403 and Ser-407 by MAPK13 during regulation of insulin secretion in pancreatic beta cells. Phosphorylated by DAPK1. Phosphorylated at Tyr-93 and by ABL at Tyr-469, which primes the kinase in response to oxidative stress, and promotes a second step activating phosphorylation at Ser-744/Ser-748 by PKRD. Phosphorylated on Ser-916 upon S.enterica infection in macrophages.

It is found in the cytoplasm. The protein resides in the cell membrane. The protein localises to the golgi apparatus. Its subcellular location is the trans-Golgi network. It carries out the reaction L-seryl-[protein] + ATP = O-phospho-L-seryl-[protein] + ADP + H(+). The enzyme catalyses L-threonyl-[protein] + ATP = O-phospho-L-threonyl-[protein] + ADP + H(+). Activated by DAG and phorbol esters. Phorbol-ester/DAG-type domain 1 binds DAG with high affinity and appears to play the dominant role in mediating translocation to the cell membrane and trans-Golgi network. Phorbol-ester/DAG-type domain 2 binds phorbol ester with higher affinity. Autophosphorylation of Ser-748 and phosphorylation of Ser-744 by PKC relieves auto-inhibition by the PH domain. Phosphorylation on Tyr-469 by the SRC-ABL1 pathway in response to oxidative stress, is also required for activation. Activated by DAPK1 under oxidative stress. In terms of biological role, serine/threonine-protein kinase that converts transient diacylglycerol (DAG) signals into prolonged physiological effects downstream of PKC, and is involved in the regulation of MAPK8/JNK1 and Ras signaling, Golgi membrane integrity and trafficking, cell survival through NF-kappa-B activation, cell migration, cell differentiation by mediating HDAC7 nuclear export, cell proliferation via MAPK1/3 (ERK1/2) signaling, and plays a role in cardiac hypertrophy, VEGFA-induced angiogenesis, genotoxic-induced apoptosis and flagellin-stimulated inflammatory response. Phosphorylates the epidermal growth factor receptor (EGFR) on dual threonine residues, which leads to the suppression of epidermal growth factor (EGF)-induced MAPK8/JNK1 activation and subsequent JUN phosphorylation. Phosphorylates RIN1, inducing RIN1 binding to 14-3-3 proteins YWHAB, YWHAE and YWHAZ and increased competition with RAF1 for binding to GTP-bound form of Ras proteins (NRAS, HRAS and KRAS). Acts downstream of the heterotrimeric G-protein beta/gamma-subunit complex to maintain the structural integrity of the Golgi membranes, and is required for protein transport along the secretory pathway. In the trans-Golgi network (TGN), regulates the fission of transport vesicles that are on their way to the plasma membrane. May act by activating the lipid kinase phosphatidylinositol 4-kinase beta (PI4KB) at the TGN for the local synthesis of phosphorylated inositol lipids, which induces a sequential production of DAG, phosphatidic acid (PA) and lyso-PA (LPA) that are necessary for membrane fission and generation of specific transport carriers to the cell surface. Under oxidative stress, is phosphorylated at Tyr-469 via SRC-ABL1 and contributes to cell survival by activating IKK complex and subsequent nuclear translocation and activation of NFKB1. Involved in cell migration by regulating integrin alpha-5/beta-3 recycling and promoting its recruitment in newly forming focal adhesion. In osteoblast differentiation, mediates the bone morphogenetic protein 2 (BMP2)-induced nuclear export of HDAC7, which results in the inhibition of HDAC7 transcriptional repression of RUNX2. In neurons, plays an important role in neuronal polarity by regulating the biogenesis of TGN-derived dendritic vesicles, and is involved in the maintenance of dendritic arborization and Golgi structure in hippocampal cells. May potentiate mitogenesis induced by the neuropeptide bombesin or vasopressin by mediating an increase in the duration of MAPK1/3 (ERK1/2) signaling, which leads to accumulation of immediate-early gene products including FOS that stimulate cell cycle progression. Plays an important role in the proliferative response induced by low calcium in keratinocytes, through sustained activation of MAPK1/3 (ERK1/2) pathway. Downstream of novel PKC signaling, plays a role in cardiac hypertrophy by phosphorylating HDAC5, which in turn triggers XPO1/CRM1-dependent nuclear export of HDAC5, MEF2A transcriptional activation and induction of downstream target genes that promote myocyte hypertrophy and pathological cardiac remodeling. Mediates cardiac troponin I (TNNI3) phosphorylation at the PKA sites, which results in reduced myofilament calcium sensitivity, and accelerated crossbridge cycling kinetics. The PRKD1-HDAC5 pathway is also involved in angiogenesis by mediating VEGFA-induced specific subset of gene expression, cell migration, and tube formation. In response to VEGFA, is necessary and required for HDAC7 phosphorylation which induces HDAC7 nuclear export and endothelial cell proliferation and migration. During apoptosis induced by cytarabine and other genotoxic agents, PRKD1 is cleaved by caspase-3 at Asp-378, resulting in activation of its kinase function and increased sensitivity of cells to the cytotoxic effects of genotoxic agents. In epithelial cells, is required for transducing flagellin-stimulated inflammatory responses by binding and phosphorylating TLR5, which contributes to MAPK14/p38 activation and production of inflammatory cytokines. Acts as an activator of NLRP3 inflammasome assembly by mediating phosphorylation of NLRP3. May play a role in inflammatory response by mediating activation of NF-kappa-B. May be involved in pain transmission by directly modulating TRPV1 receptor. Plays a role in activated KRAS-mediated stabilization of ZNF304 in colorectal cancer (CRC) cells. Regulates nuclear translocation of transcription factor TFEB in macrophages upon live S.enterica infection. This chain is Serine/threonine-protein kinase D1 (Prkd1), found in Rattus norvegicus (Rat).